Here is an 805-residue protein sequence, read N- to C-terminus: Kinesin-like protein Klp10A (805 aa).

The globular stretch occupies residues 1-274 (MDMITVGQSV…FVPLLDGQAV (274 aa)). 2 disordered regions span residues 68–94 (QHAA…SAIG) and 117–211 (IPNP…RRSH). Residues 80–94 (APMNLSRNPTQSAIG) show a composition bias toward polar residues. Residues 123 to 136 (SSNSVNTNSNSNTT) show a composition bias toward low complexity. Position 157 is a phosphoserine (Ser157). Polar residues predominate over residues 158 to 179 (QAATGQQQTRIASAVPNNTLPN). The span at 180–200 (PSAAASAGPAAQGVATAATTQ) shows a compositional bias: low complexity. The stretch at 205–244 (ASTRRSHALKEVERLKENREKRRARQAEMKEEKVALMNQD) forms a coiled coil. Residues 278-610 (QITVCVRKRP…LRYADRVKEL (333 aa)) form the Kinesin motor domain. ATP is bound at residue 368-375 (GQTGSGKT). A Phosphothreonine modification is found at Thr630. The disordered stretch occupies residues 633–688 (EEEEELNMVHPHSHQLHPNSHAPASQSNNQRAPASHHSGAVIHNNNNNNNKNGNAG). Polar residues predominate over residues 648–664 (LHPNSHAPASQSNNQRA). A compositionally biased stretch (low complexity) spans 676-688 (NNNNNNNKNGNAG). Residues Ser795, Ser797, and Ser800 each carry the phosphoserine modification.

It belongs to the TRAFAC class myosin-kinesin ATPase superfamily. Kinesin family. MCAK/KIF2 subfamily. In terms of assembly, interacts with Alms1a (via C-terminus). As to expression, expressed in male germline stem cells and spermatogonia (at protein level).

The protein localises to the cytoplasm. It localises to the cytoskeleton. Its subcellular location is the microtubule organizing center. The protein resides in the centrosome. It is found in the spindle pole. The protein localises to the chromosome. It localises to the centromere. In terms of biological role, required during anaphase to drive sister chromatid separation to promote flux by actively depolymerizing kinetochore microtubules at their pole-associated minus ends, thereby moving chromatids through a 'poleward flux'. Involved in asymmetric cell division of sensory organ precursor (SOP) cells by playing a role in the asymmetric localization of Sara-expressing endosomes to the pIIa daughter cell but not to the pIIb cell. Klp98A targets Sara-expressing endosomes to the central spindle which is symmetrically arranged in early cell division. During late cytokinesis, central spindle asymmetry is generated by enrichment of Patronin on the pIIb side which protects microtubules from depolymerization by Klp10A while unprotected microtubules on the pIIa side are disassembled by Klp10A, leading to the asymmetric delivery of Sara-expressing endosomes to the pIIa daughter cell. This is Kinesin-like protein Klp10A from Drosophila melanogaster (Fruit fly).